The following is a 629-amino-acid chain: ATP-dependent RNA helicase DeaD (629 aa).

Residues 6 to 34 (TTFADLGLKAPILEALNDLGYEKPSPIQA) carry the Q motif motif. Positions 37–208 (IPHLLNGRDV…RRFMKEPQEV (172 aa)) constitute a Helicase ATP-binding domain. 50–57 (AQTGSGKT) contributes to the ATP binding site. Residues 156–159 (DEAD) carry the DEAD box motif. Residues 232 to 379 (KNEALVRFLE…EVELPNAELL (148 aa)) enclose the Helicase C-terminal domain. Disordered regions lie at residues 438–481 (LIVP…RERR) and 560–629 (LGDA…GGDA). 2 stretches are compositionally biased toward basic and acidic residues: residues 446-481 (MRPK…RERR) and 568-629 (GGER…GGDA).

This sequence belongs to the DEAD box helicase family. DeaD/CsdA subfamily. In terms of assembly, interacts with the 50S ribosomal subunit upon shifting to 15 degrees Celsius. Also found associated with the RNA degradosome at 15 degrees Celsius; binds RNase E (rne).

It is found in the cytoplasm. The catalysed reaction is ATP + H2O = ADP + phosphate + H(+). Functionally, DEAD-box RNA helicase involved in various cellular processes at low temperature, including ribosome biogenesis, mRNA degradation and translation initiation. Exhibits RNA-stimulated ATP hydrolysis and RNA unwinding activity at low temperature. Involved in 50S ribosomal subunit assembly, acting after SrmB, and could also play a role in the biogenesis of the 30S ribosomal subunit. In addition, is involved in mRNA decay, via formation of a cold-shock degradosome with RNase E. Also stimulates translation of some mRNAs, probably at the level of initiation. The protein is ATP-dependent RNA helicase DeaD of Escherichia coli (strain K12).